The sequence spans 136 residues: Calcitonin (136 aa).

A signal peptide spans M1–A25. The propeptide occupies V26–S82. Position 42 is a phosphoserine (S42). The segment at L64–R84 is disordered. A disulfide bridge connects residues C85 and C91. Residue N87 is glycosylated (N-linked (GlcNAc...) asparagine). Residues G114–N136 form a disordered region. Residue P116 is modified to Proline amide. Residues K118–H130 are compositionally biased toward basic and acidic residues. The propeptide occupies D121 to N136.

It belongs to the calcitonin family.

It is found in the secreted. In terms of biological role, calcitonin is a peptide hormone that causes a rapid but short-lived drop in the level of calcium and phosphate in blood by promoting the incorporation of those ions in the bones. Calcitonin function is mediated by the calcitonin receptor/CALCR and the CALCR-RAMP2 (AMYR2) receptor complex. The sequence is that of Calcitonin from Rattus norvegicus (Rat).